The following is a 230-amino-acid chain: Geranylgeranylglyceryl phosphate synthase (230 aa).

Lys-13 contacts sn-glycerol 1-phosphate. 2 residues coordinate Mg(2+): Asp-15 and Thr-41. Residues 161–166 (YIEYSG), Gly-191, and 211–212 (GN) each bind sn-glycerol 1-phosphate.

Belongs to the GGGP/HepGP synthase family. Group I subfamily. Mg(2+) is required as a cofactor.

The protein resides in the cytoplasm. The catalysed reaction is sn-glycerol 1-phosphate + (2E,6E,10E)-geranylgeranyl diphosphate = sn-3-O-(geranylgeranyl)glycerol 1-phosphate + diphosphate. It participates in membrane lipid metabolism; glycerophospholipid metabolism. Prenyltransferase that catalyzes the transfer of the geranylgeranyl moiety of geranylgeranyl diphosphate (GGPP) to the C3 hydroxyl of sn-glycerol-1-phosphate (G1P). This reaction is the first ether-bond-formation step in the biosynthesis of archaeal membrane lipids. This is Geranylgeranylglyceryl phosphate synthase from Methanoculleus marisnigri (strain ATCC 35101 / DSM 1498 / JR1).